A 412-amino-acid polypeptide reads, in one-letter code: uncharacterized protein (412 aa).

Histidine 49 contributes to the Zn(2+) binding site. The active-site Proton acceptor is glutamate 52. Zn(2+) contacts are provided by histidine 53 and glutamate 129.

The protein belongs to the peptidase M16 family. Zn(2+) serves as cofactor.

This is an uncharacterized protein from Rickettsia bellii (strain RML369-C).